The chain runs to 206 residues: Cytochrome c oxidase assembly protein CtaG (206 aa).

The Cytoplasmic portion of the chain corresponds to M1–R12. A helical; Signal-anchor for type II membrane protein membrane pass occupies residues I13 to L35. The Periplasmic segment spans residues Y36–G206. Residues V184–G206 are disordered. Residues E188–G206 are compositionally biased toward polar residues.

Belongs to the COX11/CtaG family.

It is found in the cell inner membrane. Functionally, exerts its effect at some terminal stage of cytochrome c oxidase synthesis, probably by being involved in the insertion of the copper B into subunit I. The protein is Cytochrome c oxidase assembly protein CtaG of Mesorhizobium japonicum (strain LMG 29417 / CECT 9101 / MAFF 303099) (Mesorhizobium loti (strain MAFF 303099)).